The following is a 562-amino-acid chain: MLKQSNERRWSLSYKPWSTPETEDVPNTGSNQHRRSICSLGARTGSQASIAPQWTEGNYNYYIEEDEDCGEEGEDWKDDLAEENQKAECLTSLLDGHNDTPAQMSTLKVNVGGHSYLLECCELANYPKTRLGRLATSTTRRGQLGLCDDYEAQTDEYFFDRDPAVFQLIYNFYTSGVLLVRDELCPRSFLEELGYWGVRLKYTPRCCRICFEERRDELSEQLKIQRELRAQAQAEEAEELFRDMRFYGPQRQRLWNLMEKPFSSVAAKAMGVATNLFVLISVVALALNTVEEMQHQAEQGTGGGDPRPILEHVEMLCVAFFTLEFLLRLASTPNLQRFARSALNLVDLVAILPFYLQLLLECFTSEDQRHNKDSPREHDLETVGRVGKVGQVLRIMRLMRIFRILKLARHSTGLRAFGFTLRQCYQQVGCLMLFITMGIFSFSAAVYSVEHDVPGTNFTSILHAWWWAAVSISTVGYGDMYPETHLGRLFAFLCIAFGIILNGMPISILYNKFSDYYSKLKAYEYTAIRRERGKVNFMQRATKKMAECLSESHAQSTTRQEN.

Over residues 1–10 (MLKQSNERRW) the composition is skewed to basic and acidic residues. The tract at residues 1–34 (MLKQSNERRWSLSYKPWSTPETEDVPNTGSNQHR) is disordered. At 1 to 163 (MLKQSNERRW…TDEYFFDRDP (163 aa)) the chain is on the cytoplasmic side. Residues 164–184 (AVFQLIYNFYTSGVLLVRDEL) form a helical membrane-spanning segment. Topologically, residues 185 to 269 (CPRSFLEELG…KPFSSVAAKA (85 aa)) are extracellular. The chain crosses the membrane as a helical span at residues 270–290 (MGVATNLFVLISVVALALNTV). The Cytoplasmic portion of the chain corresponds to 291–344 (EEMQHQAEQGTGGGDPRPILEHVEMLCVAFFTLEFLLRLASTPNLQRFARSALN). The chain crosses the membrane as a helical span at residues 345-365 (LVDLVAILPFYLQLLLECFTS). Residues 366-391 (EDQRHNKDSPREHDLETVGRVGKVGQ) are Extracellular-facing. Residues 392–412 (VLRIMRLMRIFRILKLARHST) traverse the membrane as a helical; Voltage-sensor segment. Residues 413–427 (GLRAFGFTLRQCYQQ) are Cytoplasmic-facing. The chain crosses the membrane as a helical span at residues 428–448 (VGCLMLFITMGIFSFSAAVYS). The Extracellular segment spans residues 449–461 (VEHDVPGTNFTSI). N-linked (GlcNAc...) asparagine glycosylation occurs at Asn-457. Positions 462–482 (LHAWWWAAVSISTVGYGDMYP) form an intramembrane region, pore-forming. The short motif at 474–479 (TVGYGD) is the Selectivity filter element. The Extracellular segment spans residues 483-488 (ETHLGR). The chain crosses the membrane as a helical span at residues 489 to 509 (LFAFLCIAFGIILNGMPISIL). At 510–562 (YNKFSDYYSKLKAYEYTAIRRERGKVNFMQRATKKMAECLSESHAQSTTRQEN) the chain is on the cytoplasmic side.

Belongs to the potassium channel family. V (TC 1.A.1.2) subfamily. Kv8.2/KCNV2 sub-subfamily. In terms of assembly, heteromultimer with KCNB1, KCNC1 and KCNF1. Does not form homomultimers.

It is found in the cell membrane. Functionally, potassium channel subunit. Modulates channel activity by shifting the threshold and the half-maximal activation to more negative values. This Mus musculus (Mouse) protein is Potassium voltage-gated channel subfamily V member 2 (Kcnv2).